The chain runs to 245 residues: Major prion protein (245 aa).

An N-terminal signal peptide occupies residues 1-22 (MANLGCWMLVVFVATWSDLGLC). The segment at 23–222 (KKRPKPGGWN…ESQAYYQRGS (200 aa)) is interaction with GRB2, ERI3 and SYN1. The segment at 25-102 (RPKPGGWNTG…KPSKPKTSMK (78 aa)) is disordered. 4 consecutive repeat copies span residues 51-59 (PQGGGGWGQ), 60-67 (PHGGGWGQ), 68-75 (PHGGGWGQ), and 76-83 (PHGGGWGQ). Residues 51 to 83 (PQGGGGWGQPHGGGWGQPHGGGWGQPHGGGWGQ) form a 4 X 8 AA tandem repeats of P-H-G-G-G-W-G-Q region. Positions 52–87 (QGGGGWGQPHGGGWGQPHGGGWGQPHGGGWGQGGGT) are enriched in gly residues. Cu(2+) contacts are provided by glycine 54, glycine 55, histidine 61, glycine 62, glycine 63, histidine 69, glycine 70, glycine 71, histidine 77, glycine 78, and glycine 79. Residues 90-101 (QWHKPSKPKTSM) are compositionally biased toward basic residues. Cysteine 171 and cysteine 206 form a disulfide bridge. 2 N-linked (GlcNAc...) asparagine glycosylation sites follow: asparagine 173 and asparagine 189. Serine 222 carries GPI-anchor amidated serine lipidation. A propeptide spans 223 to 245 (SMVLFSSPPVILLISFLIFLIVG) (removed in mature form).

Belongs to the prion family. In terms of assembly, monomer and homodimer. Has a tendency to aggregate into amyloid fibrils containing a cross-beta spine, formed by a steric zipper of superposed beta-strands. Soluble oligomers may represent an intermediate stage on the path to fibril formation. Copper binding may promote oligomerization. Interacts with GRB2, APP, ERI3/PRNPIP and SYN1. Mislocalized cytosolically exposed PrP interacts with MGRN1; this interaction alters MGRN1 subcellular location and causes lysosomal enlargement. Interacts with KIAA1191.

Its subcellular location is the cell membrane. The protein localises to the golgi apparatus. Functionally, its primary physiological function is unclear. Has cytoprotective activity against internal or environmental stresses. May play a role in neuronal development and synaptic plasticity. May be required for neuronal myelin sheath maintenance. May play a role in iron uptake and iron homeostasis. Soluble oligomers are toxic to cultured neuroblastoma cells and induce apoptosis (in vitro). Association with GPC1 (via its heparan sulfate chains) targets PRNP to lipid rafts. Also provides Cu(2+) or Zn(2+) for the ascorbate-mediated GPC1 deaminase degradation of its heparan sulfate side chains. This Cercopithecus diana (Diana monkey) protein is Major prion protein (PRNP).